The following is a 258-amino-acid chain: Serine protease sp-Eoc49 (258 aa).

Residues 1–18 (MVLIRVLANLLVLQLSYA) form the signal peptide. The Peptidase S1 domain occupies 25–249 (VVGGGECNRN…YTDWIQSIIA (225 aa)). Asn44 carries N-linked (GlcNAc...) asparagine glycosylation. Cys50 and Cys66 are joined by a disulfide. His65 (charge relay system) is an active-site residue. Asn79 and Asn103 each carry an N-linked (GlcNAc...) asparagine glycan. Catalysis depends on Asp110, which acts as the Charge relay system. Cystine bridges form between Cys142–Cys210, Cys174–Cys189, and Cys200–Cys225. Residue Asn154 is glycosylated (N-linked (GlcNAc...) asparagine). Ser204 acts as the Charge relay system in catalysis. Residue Asn251 is glycosylated (N-linked (GlcNAc...) asparagine).

It belongs to the peptidase S1 family. Snake venom subfamily. In terms of assembly, monomer. In terms of tissue distribution, expressed by the venom gland.

It is found in the secreted. In terms of biological role, snake venom serine protease that may act in the hemostasis system of the prey. This chain is Serine protease sp-Eoc49, found in Echis ocellatus (Ocellated saw-scaled viper).